A 772-amino-acid chain; its full sequence is NAD(P)H-quinone oxidoreductase subunit 5, chloroplastic (772 aa).

16 helical membrane passes run 9–29 (WIIP…LLLF), 40–60 (WSFP…YLSI), 89–109 (IDPL…LVLF), 125–145 (FAYL…SNLI), 147–167 (IYIF…FWFT), 185–205 (GDFG…SFEF), 220–240 (NQVH…GAVA), 259–279 (TPIS…FLVA), 290–312 (YIMN…LALA), 328–348 (LGYM…FHLI), 355–375 (ALLF…VGYS), 397–417 (TAFL…CFWS), 426–446 (WLYS…TAFY), 550–570 (LFSL…GIPF), 604–624 (FVTN…IATF), and 731–751 (IFIF…FFVL).

This sequence belongs to the complex I subunit 5 family. NDH is composed of at least 16 different subunits, 5 of which are encoded in the nucleus.

It localises to the plastid. The protein resides in the chloroplast thylakoid membrane. It carries out the reaction a plastoquinone + NADH + (n+1) H(+)(in) = a plastoquinol + NAD(+) + n H(+)(out). It catalyses the reaction a plastoquinone + NADPH + (n+1) H(+)(in) = a plastoquinol + NADP(+) + n H(+)(out). Functionally, NDH shuttles electrons from NAD(P)H:plastoquinone, via FMN and iron-sulfur (Fe-S) centers, to quinones in the photosynthetic chain and possibly in a chloroplast respiratory chain. The immediate electron acceptor for the enzyme in this species is believed to be plastoquinone. Couples the redox reaction to proton translocation, and thus conserves the redox energy in a proton gradient. This chain is NAD(P)H-quinone oxidoreductase subunit 5, chloroplastic (ndhF), found in Oenothera argillicola (Appalachian evening primrose).